A 150-amino-acid chain; its full sequence is UPF0756 membrane protein HDEF_0364 (150 aa).

5 consecutive transmembrane segments (helical) span residues Met-1–Ser-21, Ile-28–Val-48, Tyr-51–Gly-71, Ile-88–Met-108, and Ile-123–Leu-143.

It belongs to the UPF0756 family.

The protein localises to the cell membrane. This Hamiltonella defensa subsp. Acyrthosiphon pisum (strain 5AT) protein is UPF0756 membrane protein HDEF_0364.